The chain runs to 186 residues: Adenylyl-sulfate kinase (186 aa).

Position 17–24 (G17–T24) interacts with ATP. S91 (phosphoserine intermediate) is an active-site residue.

The protein belongs to the APS kinase family.

It catalyses the reaction adenosine 5'-phosphosulfate + ATP = 3'-phosphoadenylyl sulfate + ADP + H(+). It participates in sulfur metabolism; hydrogen sulfide biosynthesis; sulfite from sulfate: step 2/3. Catalyzes the synthesis of activated sulfate. The chain is Adenylyl-sulfate kinase from Chloroflexus aurantiacus (strain ATCC 29364 / DSM 637 / Y-400-fl).